Consider the following 242-residue polypeptide: Ubiquinone biosynthesis O-methyltransferase (242 aa).

S-adenosyl-L-methionine is bound by residues Arg44, Gly64, Asp85, and Met129.

This sequence belongs to the methyltransferase superfamily. UbiG/COQ3 family.

The catalysed reaction is a 3-demethylubiquinol + S-adenosyl-L-methionine = a ubiquinol + S-adenosyl-L-homocysteine + H(+). It carries out the reaction a 3-(all-trans-polyprenyl)benzene-1,2-diol + S-adenosyl-L-methionine = a 2-methoxy-6-(all-trans-polyprenyl)phenol + S-adenosyl-L-homocysteine + H(+). It participates in cofactor biosynthesis; ubiquinone biosynthesis. Its function is as follows. O-methyltransferase that catalyzes the 2 O-methylation steps in the ubiquinone biosynthetic pathway. In Salmonella choleraesuis (strain SC-B67), this protein is Ubiquinone biosynthesis O-methyltransferase.